The following is a 191-amino-acid chain: Fe/S biogenesis protein NfuA (191 aa).

2 residues coordinate [4Fe-4S] cluster: cysteine 149 and cysteine 152.

This sequence belongs to the NfuA family. Homodimer. It depends on [4Fe-4S] cluster as a cofactor.

In terms of biological role, involved in iron-sulfur cluster biogenesis. Binds a 4Fe-4S cluster, can transfer this cluster to apoproteins, and thereby intervenes in the maturation of Fe/S proteins. Could also act as a scaffold/chaperone for damaged Fe/S proteins. In Photorhabdus laumondii subsp. laumondii (strain DSM 15139 / CIP 105565 / TT01) (Photorhabdus luminescens subsp. laumondii), this protein is Fe/S biogenesis protein NfuA.